Reading from the N-terminus, the 402-residue chain is Putative PDZ domain-containing protein PDZK1P1 (402 aa).

PDZ domains lie at 12–93 (RLCY…VDKE) and 121–206 (IVEM…VDKE). Residues 230–258 (GSVKEAPAPTPTSLEVSSPPDTTEEEDHK) form a disordered region. The span at 240–250 (PTSLEVSSPPD) shows a compositional bias: polar residues. Positions 261–341 (LCRLAKGENG…NVTLLVCGKK (81 aa)) constitute a PDZ 3 domain. The disordered stretch occupies residues 362–402 (DTPPDSKEGIVVESKHDSHMAKERAHSTASHSSSNSEDTEM). The span at 365-387 (PDSKEGIVVESKHDSHMAKERAH) shows a compositional bias: basic and acidic residues. Low complexity predominate over residues 388–402 (STASHSSSNSEDTEM).

The protein belongs to the NHER family.

The polypeptide is Putative PDZ domain-containing protein PDZK1P1 (Homo sapiens (Human)).